Reading from the N-terminus, the 480-residue chain is Glutamate--tRNA ligase (480 aa).

Residues 12–22 (PSPTGAPHLGL) carry the 'HIGH' region motif. A 'KMSKS' region motif is present at residues 255 to 259 (KLSKR). Lys-258 contacts ATP.

Belongs to the class-I aminoacyl-tRNA synthetase family. Glutamate--tRNA ligase type 1 subfamily. As to quaternary structure, monomer.

It localises to the cytoplasm. The enzyme catalyses tRNA(Glu) + L-glutamate + ATP = L-glutamyl-tRNA(Glu) + AMP + diphosphate. In terms of biological role, catalyzes the attachment of glutamate to tRNA(Glu) in a two-step reaction: glutamate is first activated by ATP to form Glu-AMP and then transferred to the acceptor end of tRNA(Glu). The sequence is that of Glutamate--tRNA ligase from Tropheryma whipplei (strain TW08/27) (Whipple's bacillus).